Consider the following 353-residue polypeptide: Phospho-N-acetylmuramoyl-pentapeptide-transferase (353 aa).

The next 10 membrane-spanning stretches (helical) occupy residues 24-44 (LGFF…ILWA), 66-86 (TPTM…VLCA), 88-108 (LGNL…FVGF), 129-149 (FGML…KGLD), 160-180 (PLFE…FLST), 192-212 (GLAS…VYVA), 229-249 (VGEL…FLWY), 256-276 (VFMG…NAIV), 281-301 (ILLV…ILQV), and 330-350 (KVIV…LLSL).

This sequence belongs to the glycosyltransferase 4 family. MraY subfamily. The cofactor is Mg(2+).

The protein localises to the cell inner membrane. It carries out the reaction UDP-N-acetyl-alpha-D-muramoyl-L-alanyl-gamma-D-glutamyl-meso-2,6-diaminopimeloyl-D-alanyl-D-alanine + di-trans,octa-cis-undecaprenyl phosphate = di-trans,octa-cis-undecaprenyl diphospho-N-acetyl-alpha-D-muramoyl-L-alanyl-D-glutamyl-meso-2,6-diaminopimeloyl-D-alanyl-D-alanine + UMP. It participates in cell wall biogenesis; peptidoglycan biosynthesis. In terms of biological role, catalyzes the initial step of the lipid cycle reactions in the biosynthesis of the cell wall peptidoglycan: transfers peptidoglycan precursor phospho-MurNAc-pentapeptide from UDP-MurNAc-pentapeptide onto the lipid carrier undecaprenyl phosphate, yielding undecaprenyl-pyrophosphoryl-MurNAc-pentapeptide, known as lipid I. The polypeptide is Phospho-N-acetylmuramoyl-pentapeptide-transferase (Helicobacter pylori (strain Shi470)).